The sequence spans 149 residues: MRAVVQRVSFSEVRVEGKLRGRIKQGLMVLLGIKKGDSKAEGDYLLEKIVNLRIFPDEEGKMNRSLLDIEGEILLVSQFTLYGDARKGRRPSFSAAELPELAEALFDYCVDGLRQRGVQVETGTFGAEMLLSIENDGPCTILLDSEKLF.

A Gly-cisPro motif, important for rejection of L-amino acids motif is present at residues 137-138 (GP).

The protein belongs to the DTD family. As to quaternary structure, homodimer.

Its subcellular location is the cytoplasm. The enzyme catalyses glycyl-tRNA(Ala) + H2O = tRNA(Ala) + glycine + H(+). It carries out the reaction a D-aminoacyl-tRNA + H2O = a tRNA + a D-alpha-amino acid + H(+). Functionally, an aminoacyl-tRNA editing enzyme that deacylates mischarged D-aminoacyl-tRNAs. Also deacylates mischarged glycyl-tRNA(Ala), protecting cells against glycine mischarging by AlaRS. Acts via tRNA-based rather than protein-based catalysis; rejects L-amino acids rather than detecting D-amino acids in the active site. By recycling D-aminoacyl-tRNA to D-amino acids and free tRNA molecules, this enzyme counteracts the toxicity associated with the formation of D-aminoacyl-tRNA entities in vivo and helps enforce protein L-homochirality. This is D-aminoacyl-tRNA deacylase from Syntrophomonas wolfei subsp. wolfei (strain DSM 2245B / Goettingen).